The sequence spans 393 residues: UDP-glucose 6-dehydrogenase (393 aa).

Valine 11, aspartate 31, lysine 36, threonine 85, threonine 120, and glutamate 147 together coordinate NAD(+). Substrate is bound by residues 143–147, lysine 199, asparagine 203, 244–248, and glycine 252; these read EFLRE and YNNPS. Residue tyrosine 254 participates in NAD(+) binding. Cysteine 255 serves as the catalytic Nucleophile. NAD(+) is bound at residue lysine 258. Residue lysine 309 coordinates substrate. Arginine 316 serves as a coordination point for NAD(+).

This sequence belongs to the UDP-glucose/GDP-mannose dehydrogenase family. In terms of assembly, homodimer.

It catalyses the reaction UDP-alpha-D-glucose + 2 NAD(+) + H2O = UDP-alpha-D-glucuronate + 2 NADH + 3 H(+). The protein operates within nucleotide-sugar biosynthesis; UDP-alpha-D-glucuronate biosynthesis; UDP-alpha-D-glucuronate from UDP-alpha-D-glucose: step 1/1. It participates in capsule biogenesis; capsule polysaccharide biosynthesis. Functionally, catalyzes the formation of UDP-glucuronic acid which is required for capsular polysaccharide synthesis. Does not catalyze the formation of glucuronamide moiety of the capsular polysaccharide. This is UDP-glucose 6-dehydrogenase from Campylobacter jejuni subsp. jejuni serotype O:2 (strain ATCC 700819 / NCTC 11168).